Consider the following 447-residue polypeptide: NADH-quinone oxidoreductase subunit F (447 aa).

61–70 (GRGGAGFSTG) is an NAD(+) binding site. Residue 174–221 (GAGRYICGEETALINSLEGRRANPRAKPPFPAVFGLWGKPTCVNNVET) participates in FMN binding. Residues C352, C355, C358, and C399 each coordinate [4Fe-4S] cluster.

It belongs to the complex I 51 kDa subunit family. Composed of 13 different subunits. Subunits NuoCD, E, F, and G constitute the peripheral sector of the complex. [4Fe-4S] cluster serves as cofactor. FMN is required as a cofactor.

It catalyses the reaction a quinone + NADH + 5 H(+)(in) = a quinol + NAD(+) + 4 H(+)(out). NDH-1 shuttles electrons from NADH, via FMN and iron-sulfur (Fe-S) centers, to quinones in the respiratory chain. Couples the redox reaction to proton translocation (for every two electrons transferred, four hydrogen ions are translocated across the cytoplasmic membrane), and thus conserves the redox energy in a proton gradient. This chain is NADH-quinone oxidoreductase subunit F (nuoF), found in Buchnera aphidicola subsp. Schizaphis graminum (strain Sg).